Reading from the N-terminus, the 926-residue chain is Beta-mannosidase A (926 aa).

Residues 1–21 (MHVKAETVLALLTPAPPSVVG) form the signal peptide. N-linked (GlcNAc...) asparagine glycosylation is found at N40, N242, N277, N311, and N342. Residue E474 is the Proton donor of the active site. Residues N532, N603, N626, N653, N733, N756, N785, N793, N819, and N905 are each glycosylated (N-linked (GlcNAc...) asparagine).

The protein belongs to the glycosyl hydrolase 2 family. Beta-mannosidase A subfamily. In terms of assembly, homodimer.

It is found in the secreted. The enzyme catalyses Hydrolysis of terminal, non-reducing beta-D-mannose residues in beta-D-mannosides.. It participates in glycan metabolism; N-glycan degradation. Its function is as follows. Exoglycosidase that cleaves the single beta-linked mannose residue from the non-reducing end of beta-mannosidic oligosaccharides of various complexity and length. Involved in the degradation of polymeric mannan and galactomannan. This chain is Beta-mannosidase A (mndA), found in Aspergillus fumigatus (strain ATCC MYA-4609 / CBS 101355 / FGSC A1100 / Af293) (Neosartorya fumigata).